Reading from the N-terminus, the 500-residue chain is NAD(P)H-quinone oxidoreductase chain 4, chloroplastic (500 aa).

14 helical membrane-spanning segments follow: residues 4–24 (FPWL…MLFL), 35–55 (YTIC…CYNF), 87–107 (IGTI…AFPV), 113–130 (LFHF…GSFS), 134–154 (LLLF…LLSM), 167–187 (FILY…GISL), 211–231 (ILFY…IPLH), 242–262 (HYST…YGLV), 272–292 (AHSM…IYAA), 305–325 (IAYS…SITD), 330–350 (GAIL…FLAG), 386–406 (LALP…GIIT), 416–436 (ILII…LLSM), and 462–482 (LFLS…PDFV).

The protein belongs to the complex I subunit 4 family.

It localises to the plastid. It is found in the chloroplast thylakoid membrane. The enzyme catalyses a plastoquinone + NADH + (n+1) H(+)(in) = a plastoquinol + NAD(+) + n H(+)(out). It carries out the reaction a plastoquinone + NADPH + (n+1) H(+)(in) = a plastoquinol + NADP(+) + n H(+)(out). The polypeptide is NAD(P)H-quinone oxidoreductase chain 4, chloroplastic (Olimarabidopsis pumila (Dwarf rocket)).